Consider the following 118-residue polypeptide: Putative cytochrome P450 family member 4F30 (118 aa).

Residues 1-64 (MVTPAGCLGG…GPLHILGTDG (64 aa)) are disordered. Polar residues predominate over residues 28-43 (RAGQTGQAVSGAQVSS).

This chain is Putative cytochrome P450 family member 4F30 (CYP4F30P), found in Homo sapiens (Human).